Reading from the N-terminus, the 172-residue chain is Small ribosomal subunit protein uS5 (172 aa).

One can recognise an S5 DRBM domain in the interval 15–78 (LNDKLIFINR…ANAKRNLSRI (64 aa)).

Belongs to the universal ribosomal protein uS5 family. Part of the 30S ribosomal subunit. Contacts proteins S4 and S8.

In terms of biological role, with S4 and S12 plays an important role in translational accuracy. Its function is as follows. Located at the back of the 30S subunit body where it stabilizes the conformation of the head with respect to the body. This is Small ribosomal subunit protein uS5 from Dehalococcoides mccartyi (strain CBDB1).